The sequence spans 350 residues: S-adenosylmethionine:tRNA ribosyltransferase-isomerase (350 aa).

The protein belongs to the QueA family. As to quaternary structure, monomer.

The protein resides in the cytoplasm. The enzyme catalyses 7-aminomethyl-7-carbaguanosine(34) in tRNA + S-adenosyl-L-methionine = epoxyqueuosine(34) in tRNA + adenine + L-methionine + 2 H(+). It participates in tRNA modification; tRNA-queuosine biosynthesis. Transfers and isomerizes the ribose moiety from AdoMet to the 7-aminomethyl group of 7-deazaguanine (preQ1-tRNA) to give epoxyqueuosine (oQ-tRNA). In Aliivibrio fischeri (strain ATCC 700601 / ES114) (Vibrio fischeri), this protein is S-adenosylmethionine:tRNA ribosyltransferase-isomerase.